A 550-amino-acid chain; its full sequence is Chaperonin GroEL (550 aa).

Residues 30-33, lysine 51, 87-91, glycine 415, 479-481, and aspartate 495 contribute to the ATP site; these read TLGP, DGTTT, and NAA.

Belongs to the chaperonin (HSP60) family. Forms a cylinder of 14 subunits composed of two heptameric rings stacked back-to-back. Interacts with the co-chaperonin GroES.

The protein localises to the cytoplasm. The enzyme catalyses ATP + H2O + a folded polypeptide = ADP + phosphate + an unfolded polypeptide.. Together with its co-chaperonin GroES, plays an essential role in assisting protein folding. The GroEL-GroES system forms a nano-cage that allows encapsulation of the non-native substrate proteins and provides a physical environment optimized to promote and accelerate protein folding. This Burkholderia mallei (strain NCTC 10247) protein is Chaperonin GroEL.